Consider the following 489-residue polypeptide: Long chain base biosynthesis protein 2d (489 aa).

Residues 4 to 24 form a helical membrane-spanning segment; it reads LPYVTALTTLFSYGLLFAFGQ. An N6-(pyridoxal phosphate)lysine modification is found at K311.

It belongs to the class-II pyridoxal-phosphate-dependent aminotransferase family. Heterodimer with LCB1. Component of the serine palmitoyltransferase (SPT) complex, composed of LCB1 and LCB2. The cofactor is pyridoxal 5'-phosphate.

The protein localises to the endoplasmic reticulum membrane. It carries out the reaction L-serine + hexadecanoyl-CoA + H(+) = 3-oxosphinganine + CO2 + CoA. It participates in lipid metabolism; sphingolipid metabolism. Serine palmitoyltransferase (SPT). The heterodimer formed with LCB1 constitutes the catalytic core. The protein is Long chain base biosynthesis protein 2d of Oryza sativa subsp. japonica (Rice).